A 491-amino-acid polypeptide reads, in one-letter code: Tryptophan 5-hydroxylase 2 (491 aa).

The residue at position 19 (Ser-19) is a Phosphoserine. A disordered region spans residues 33 to 63 (NLTVNKSNSGKNDDKKGNKGSSRSETAPDSG). The ACT domain occupies 66 to 141 (AVVFSLRNEV…TIVTLNPPEN (76 aa)). The Fe cation site is built by His-319, His-324, and Glu-364.

This sequence belongs to the biopterin-dependent aromatic amino acid hydroxylase family. As to quaternary structure, interacts with DNAJC12. Requires Fe(2+) as cofactor.

The enzyme catalyses (6R)-L-erythro-5,6,7,8-tetrahydrobiopterin + L-tryptophan + O2 = 5-hydroxy-L-tryptophan + (4aS,6R)-4a-hydroxy-L-erythro-5,6,7,8-tetrahydrobiopterin. The protein operates within aromatic compound metabolism; serotonin biosynthesis; serotonin from L-tryptophan: step 1/2. This chain is Tryptophan 5-hydroxylase 2 (TPH2), found in Equus caballus (Horse).